Consider the following 139-residue polypeptide: Lamprin 0.9 (139 aa).

A signal peptide spans 1 to 19; that stretch reads MAAAIQALLVLALLHLATA. 8 repeat units span residues 42 to 46, 47 to 51, 52 to 56, 57 to 61, 62 to 66, 67 to 71, 92 to 96, and 106 to 110. The segment at 42–110 is 8 X 5 AA approximate repeats; it reads GGLGYGGLGY…YHHALGGLGY (69 aa).

As to quaternary structure, the polymeric lamprin chains self-aggregate to form fibers and have secondary structures particularly rich in beta-sheets and in beta-turns.

The protein resides in the secreted. It localises to the extracellular space. The protein localises to the extracellular matrix. Functionally, self-aggregating protein that is part of the soluble form of lamprin. The sequence is that of Lamprin 0.9 from Petromyzon marinus (Sea lamprey).